The following is a 220-amino-acid chain: Ribosomal RNA small subunit methyltransferase G (220 aa).

Residues glycine 78, leucine 83, and arginine 144 each contribute to the S-adenosyl-L-methionine site.

This sequence belongs to the methyltransferase superfamily. RNA methyltransferase RsmG family.

The protein localises to the cytoplasm. It catalyses the reaction guanosine(527) in 16S rRNA + S-adenosyl-L-methionine = N(7)-methylguanosine(527) in 16S rRNA + S-adenosyl-L-homocysteine. In terms of biological role, specifically methylates the N7 position of guanine in position 527 of 16S rRNA. The polypeptide is Ribosomal RNA small subunit methyltransferase G (Alkalilimnicola ehrlichii (strain ATCC BAA-1101 / DSM 17681 / MLHE-1)).